The primary structure comprises 150 residues: Endoribonuclease YbeY (150 aa).

Zn(2+) contacts are provided by histidine 108, histidine 112, and histidine 118.

Belongs to the endoribonuclease YbeY family. The cofactor is Zn(2+).

The protein localises to the cytoplasm. Its function is as follows. Single strand-specific metallo-endoribonuclease involved in late-stage 70S ribosome quality control and in maturation of the 3' terminus of the 16S rRNA. This chain is Endoribonuclease YbeY, found in Methylococcus capsulatus (strain ATCC 33009 / NCIMB 11132 / Bath).